Consider the following 322-residue polypeptide: Ribonucleoside-diphosphate reductase subunit beta nrdF1 (322 aa).

Fe cation-binding residues include aspartate 70, glutamate 101, and histidine 104. Tyrosine 108 is a catalytic residue. Residues glutamate 161, glutamate 195, and histidine 198 each contribute to the Fe cation site.

The protein belongs to the ribonucleoside diphosphate reductase small chain family. In terms of assembly, tetramer of two alpha and two beta subunits. The cofactor is Fe cation.

It carries out the reaction a 2'-deoxyribonucleoside 5'-diphosphate + [thioredoxin]-disulfide + H2O = a ribonucleoside 5'-diphosphate + [thioredoxin]-dithiol. Functionally, provides the precursors necessary for DNA synthesis. Catalyzes the biosynthesis of deoxyribonucleotides from the corresponding ribonucleotides. The chain is Ribonucleoside-diphosphate reductase subunit beta nrdF1 (nrdF1) from Mycobacterium tuberculosis (strain CDC 1551 / Oshkosh).